A 354-amino-acid chain; its full sequence is D-alanine--D-alanine ligase (354 aa).

Residues 132-342 (KMVFERAGLP…FPSLVDRLLQ (211 aa)) form the ATP-grasp domain. ATP is bound at residue 168–223 (EAQVGYPCFVKPANLGSSVGIAKVRNRSELEAALDNAASYDRRIIVEAGLTDIREV). D295, E309, and N311 together coordinate Mg(2+).

Belongs to the D-alanine--D-alanine ligase family. Mg(2+) is required as a cofactor. It depends on Mn(2+) as a cofactor.

Its subcellular location is the cytoplasm. It carries out the reaction 2 D-alanine + ATP = D-alanyl-D-alanine + ADP + phosphate + H(+). Its pathway is cell wall biogenesis; peptidoglycan biosynthesis. Cell wall formation. This Synechocystis sp. (strain ATCC 27184 / PCC 6803 / Kazusa) protein is D-alanine--D-alanine ligase.